The chain runs to 404 residues: MKPPFQEALGIIQQLKQHGYDAYFVGGAVRDLLLGRPIGDVDIATSALPEDVMAIFPKTIDVGSKHGTVVVVHKGKAYEVTTFKTDGDYEDYRRPESVTFVRSLEEDLKRRDFTMNAIAMDEYGTIIDPFGGREAIRRRIIRTVGEAEKRFREDALRMMRAVRFVSELGFALAPDTEQAIVQNAPLLAHISVERMTMEMEKLLGGPFAARALPLLAETGLNAYLPGLAGKEKQLRLAAAYRWPWLAAREERWALLCHALGVQESRPFLRAWKLPNKVVDEAGAILTALADIPRPEAWTNEQLFSAGLERALSVETVRAAFTGAPPGPWHEKLRRRFASLPIKTKGELAVNGKDVIEWVGKPAGPWVKEALDAIWRAVVNGEVENEKERIYAWLMERNRTREKNC.

Residues Gly27 and Arg30 each contribute to the ATP site. 2 residues coordinate CTP: Gly27 and Arg30. Residues Asp40 and Asp42 each coordinate Mg(2+). ATP is bound by residues Arg111, Asp154, Arg157, Arg160, and Arg163. Residues Arg111, Asp154, Arg157, Arg160, and Arg163 each contribute to the CTP site.

It belongs to the tRNA nucleotidyltransferase/poly(A) polymerase family. Bacterial CCA-adding enzyme type 3 subfamily. Homodimer. It depends on Mg(2+) as a cofactor.

It catalyses the reaction a tRNA precursor + 2 CTP + ATP = a tRNA with a 3' CCA end + 3 diphosphate. The enzyme catalyses a tRNA with a 3' CCA end + 2 CTP + ATP = a tRNA with a 3' CCACCA end + 3 diphosphate. Its function is as follows. Catalyzes the addition and repair of the essential 3'-terminal CCA sequence in tRNAs without using a nucleic acid template. Adds these three nucleotides in the order of C, C, and A to the tRNA nucleotide-73, using CTP and ATP as substrates and producing inorganic pyrophosphate. tRNA 3'-terminal CCA addition is required both for tRNA processing and repair. Also involved in tRNA surveillance by mediating tandem CCA addition to generate a CCACCA at the 3' terminus of unstable tRNAs. While stable tRNAs receive only 3'-terminal CCA, unstable tRNAs are marked with CCACCA and rapidly degraded. The structural flexibility of RNA controls the choice between CCA versus CCACCA addition: following the first CCA addition cycle, nucleotide-binding to the active site triggers a clockwise screw motion, producing torque on the RNA. This ejects stable RNAs, whereas unstable RNAs are refolded while bound to the enzyme and subjected to a second CCA catalytic cycle. This chain is CCA-adding enzyme, found in Geobacillus stearothermophilus (Bacillus stearothermophilus).